A 160-amino-acid chain; its full sequence is Ribosomal RNA large subunit methyltransferase H (160 aa).

S-adenosyl-L-methionine contacts are provided by Leu76 and Gly108.

The protein belongs to the RNA methyltransferase RlmH family. As to quaternary structure, homodimer.

It localises to the cytoplasm. It carries out the reaction pseudouridine(1915) in 23S rRNA + S-adenosyl-L-methionine = N(3)-methylpseudouridine(1915) in 23S rRNA + S-adenosyl-L-homocysteine + H(+). Its function is as follows. Specifically methylates the pseudouridine at position 1915 (m3Psi1915) in 23S rRNA. The polypeptide is Ribosomal RNA large subunit methyltransferase H (Nitrobacter winogradskyi (strain ATCC 25391 / DSM 10237 / CIP 104748 / NCIMB 11846 / Nb-255)).